Here is a 142-residue protein sequence, read N- to C-terminus: Arginine decarboxylase proenzyme (142 aa).

The active-site Schiff-base intermediate with substrate; via pyruvic acid is the Ser81. Residue Ser81 is modified to Pyruvic acid (Ser); by autocatalysis. His86 acts as the Proton acceptor; for processing activity in catalysis. The active-site Proton donor; for catalytic activity is Cys101.

This sequence belongs to the prokaryotic AdoMetDC family. Type 1 subfamily. In terms of assembly, heterooctamer of four alpha and four beta chains arranged as a tetramer of alpha/beta heterodimers. Pyruvate is required as a cofactor. In terms of processing, is synthesized initially as an inactive proenzyme. Formation of the active enzyme involves a self-maturation process in which the active site pyruvoyl group is generated from an internal serine residue via an autocatalytic post-translational modification. Two non-identical subunits are generated from the proenzyme in this reaction, and the pyruvate is formed at the N-terminus of the alpha chain, which is derived from the carboxyl end of the proenzyme. The post-translation cleavage follows an unusual pathway, termed non-hydrolytic serinolysis, in which the side chain hydroxyl group of the serine supplies its oxygen atom to form the C-terminus of the beta chain, while the remainder of the serine residue undergoes an oxidative deamination to produce ammonia and the pyruvoyl group blocking the N-terminus of the alpha chain.

It carries out the reaction L-arginine + H(+) = agmatine + CO2. The protein operates within amine and polyamine biosynthesis; agmatine biosynthesis; agmatine from L-arginine: step 1/1. In terms of biological role, specifically catalyzes the decarboxylation of L-arginine to agmatine. Has no S-adenosylmethionine decarboxylase (AdoMetDC) activity. This is Arginine decarboxylase proenzyme from Hyperthermus butylicus (strain DSM 5456 / JCM 9403 / PLM1-5).